The primary structure comprises 462 residues: Putative zinc metalloprotease RSc1411 (462 aa).

A helical transmembrane segment spans residues 1-21 (MLTVLAFVFAIAVLIVVHELG). H18 contacts Zn(2+). Residue E19 is part of the active site. H22 lines the Zn(2+) pocket. The helical transmembrane segment at 102 to 124 (FAIVAAGPVFNFLLAIALYALLA) threads the bilayer. The 83-residue stretch at 201–283 (TVRLRELPSA…MPEQNASIDI (83 aa)) folds into the PDZ domain. Helical transmembrane passes span 386 to 406 (FVAFLALISVSLGVLNLLPVP) and 430 to 450 (WQAVLQKIGIACILLLTSLAL).

This sequence belongs to the peptidase M50B family. Requires Zn(2+) as cofactor.

The protein resides in the cell inner membrane. In Ralstonia nicotianae (strain ATCC BAA-1114 / GMI1000) (Ralstonia solanacearum), this protein is Putative zinc metalloprotease RSc1411.